We begin with the raw amino-acid sequence, 572 residues long: Proline--tRNA ligase (572 aa).

Belongs to the class-II aminoacyl-tRNA synthetase family. ProS type 1 subfamily. In terms of assembly, homodimer.

It localises to the cytoplasm. It carries out the reaction tRNA(Pro) + L-proline + ATP = L-prolyl-tRNA(Pro) + AMP + diphosphate. Functionally, catalyzes the attachment of proline to tRNA(Pro) in a two-step reaction: proline is first activated by ATP to form Pro-AMP and then transferred to the acceptor end of tRNA(Pro). As ProRS can inadvertently accommodate and process non-cognate amino acids such as alanine and cysteine, to avoid such errors it has two additional distinct editing activities against alanine. One activity is designated as 'pretransfer' editing and involves the tRNA(Pro)-independent hydrolysis of activated Ala-AMP. The other activity is designated 'posttransfer' editing and involves deacylation of mischarged Ala-tRNA(Pro). The misacylated Cys-tRNA(Pro) is not edited by ProRS. The polypeptide is Proline--tRNA ligase (Salmonella schwarzengrund (strain CVM19633)).